A 789-amino-acid polypeptide reads, in one-letter code: SWI5-dependent HO expression protein 4 (789 aa).

A Phosphoserine modification is found at serine 18.

It is found in the cytoplasm. Its function is as follows. Required for mother cell-specific ho expression. Might be required for the transport of factors (such as ASH1) that promote HO repression from the mother cell into its bud. This Saccharomyces cerevisiae (strain ATCC 204508 / S288c) (Baker's yeast) protein is SWI5-dependent HO expression protein 4 (SHE4).